The following is a 758-amino-acid chain: Spastin (758 aa).

The interval 1-103 (MVRTKNQSSS…SPRSGHHHSY (103 aa)) is disordered. Residues 1–121 (MVRTKNQSSS…KQNLYVVSFP (121 aa)) lie on the Cytoplasmic side of the membrane. Residues 1 to 210 (MVRTKNQSSS…RPIQPLEMAA (210 aa)) are required for localization to punctate cytoplasmic foci. Low complexity-rich tracts occupy residues 8–28 (SSSS…SSGA), 43–58 (RSSS…AGGS), 66–76 (SSNRRSPGSSP), and 85–95 (TDDLTPTTCSP). An intramembrane region (helical) is located at residues 122–142 (IIFLFNVLRSLIYQLFCIFRY). Topologically, residues 143–758 (LYGASTKVIY…WSQDYGDITI (616 aa)) are cytoplasmic. Composition is skewed to polar residues over residues 169-180 (SKEQQQSLNHPS) and 189-198 (QEQQLSNQPQ). A disordered region spans residues 169 to 202 (SKEQQQSLNHPSELNREGDGQEQQLSNQPQRFRP). Residues 208-758 (MAANRPGGGY…WSQDYGDITI (551 aa)) are sufficient for interaction with microtubules and microtubule severing. Residues 233–308 (HRRAFEYISK…SMARDRLHFL (76 aa)) form the MIT domain. A disordered region spans residues 353-454 (RVRSSGYGPK…GPSGSGASTP (102 aa)). Composition is skewed to polar residues over residues 390 to 406 (NKSQ…TSVG) and 425 to 454 (QFSS…ASTP). Residues 443-455 (NNGPSGSGASTPV) are required for interaction with microtubules. 523–530 (GPPGNGKT) provides a ligand contact to ATP.

This sequence belongs to the AAA ATPase family. Spastin subfamily. Homohexamer. The homohexamer is stabilized by ATP-binding. The homohexamer may adopt a ring conformation through which microtubules pass prior to being severed. Interacts with microtubules. Interacts with atl; may be involved in microtubule dynamics.

The protein resides in the membrane. It is found in the cytoplasm. The protein localises to the cytoskeleton. Its subcellular location is the microtubule organizing center. It localises to the centrosome. The protein resides in the chromosome. It is found in the lipid droplet. It carries out the reaction n ATP + n H2O + a microtubule = n ADP + n phosphate + (n+1) alpha/beta tubulin heterodimers.. Functionally, ATP-dependent microtubule severing protein. Stimulates microtubule minus-end depolymerization and poleward microtubule flux in the mitotic spindle. Regulates microtubule stability in the neuromuscular junction synapse. Involved in lipid metabolism by regulating the size and distribution of lipid droplets. Involved in axon regeneration by regulating microtubule severing. This Drosophila sechellia (Fruit fly) protein is Spastin.